Consider the following 239-residue polypeptide: MEFFNILQSACNDVNLDFNDKKYNQLISYKNLIQEWNKKINLTAIVEDDEIIKKHFIDCIKIFKSSPIGEAKSLIDIGTGAGFPGIPIKILKEDIEITLLDSLQKRINFLNTVIGELQLKNIQCLHGRAEDYAQEIQHRQKYDIAVSRAVANLAVLSEFCIPFVEKGGYFIAMKGPSVEEEITAATKSIEILGGKIEDIIKIDIEDTDLKHNLVIIKKVKETGKRYPRKPGIIKKNPLK.

S-adenosyl-L-methionine contacts are provided by residues G78, F83, 129–130 (AE), and R148.

This sequence belongs to the methyltransferase superfamily. RNA methyltransferase RsmG family.

The protein resides in the cytoplasm. Its function is as follows. Specifically methylates the N7 position of a guanine in 16S rRNA. This Clostridium botulinum (strain ATCC 19397 / Type A) protein is Ribosomal RNA small subunit methyltransferase G.